The following is a 394-amino-acid chain: Elongation factor Tu 2 (394 aa).

In terms of domain architecture, tr-type G spans 10-204 (KPHVNVGTIG…ALDTYIPEPE (195 aa)). Residues 19-26 (GHVDHGKT) form a G1 region. 19–26 (GHVDHGKT) contacts GTP. Thr-26 serves as a coordination point for Mg(2+). The segment at 60–64 (GITIS) is G2. Residues 81 to 84 (DCPG) form a G3 region. GTP contacts are provided by residues 81-85 (DCPGH) and 136-139 (NKCD). Positions 136–139 (NKCD) are G4. The tract at residues 174 to 176 (SAL) is G5.

The protein belongs to the TRAFAC class translation factor GTPase superfamily. Classic translation factor GTPase family. EF-Tu/EF-1A subfamily. Monomer.

The protein localises to the cytoplasm. The catalysed reaction is GTP + H2O = GDP + phosphate + H(+). GTP hydrolase that promotes the GTP-dependent binding of aminoacyl-tRNA to the A-site of ribosomes during protein biosynthesis. The chain is Elongation factor Tu 2 from Vibrio vulnificus (strain CMCP6).